The chain runs to 143 residues: Large ribosomal subunit protein uL15 (143 aa).

The interval 20-52 (GRGIGSGKGKTAGRGHKGQHSRAGGYHKVGFEG) is disordered. The span at 30–39 (TAGRGHKGQH) shows a compositional bias: basic residues.

The protein belongs to the universal ribosomal protein uL15 family. As to quaternary structure, part of the 50S ribosomal subunit.

Functionally, binds to the 23S rRNA. This is Large ribosomal subunit protein uL15 from Coxiella burnetii (strain CbuG_Q212) (Coxiella burnetii (strain Q212)).